The following is a 328-amino-acid chain: AA9 family lytic polysaccharide monooxygenase A (328 aa).

The N-terminal stretch at 1–21 (MPSTKVAALSAVLALASTVAG) is a signal peptide. Cu(2+) is bound at residue histidine 22. Position 22 is a methylhistidine (histidine 22). Intrachain disulfides connect cysteine 77–cysteine 199 and cysteine 118–cysteine 122. Residue asparagine 80 is glycosylated (N-linked (GlcNAc...) asparagine). Residue histidine 107 participates in Cu(2+) binding. N-linked (GlcNAc...) asparagine glycosylation is found at asparagine 121 and asparagine 159. O2-binding residues include histidine 185 and glutamine 194. Residue tyrosine 196 participates in Cu(2+) binding. 2 O-linked (Man...) serine glycosylation sites follow: serine 235 and serine 237. 2 O-linked (Man...) threonine glycosylation sites follow: threonine 238 and threonine 245.

This sequence belongs to the polysaccharide monooxygenase AA9 family. It depends on Cu(2+) as a cofactor. Post-translationally, the catalytically essential N-terminal histidine His-22 is post-translationally modified by methylation to prevent protonation of the histidine side chain, and protect the critical active site of the enzyme from oxidative damage.

It localises to the secreted. The catalysed reaction is [(1-&gt;4)-beta-D-glucosyl]n+m + reduced acceptor + O2 = 4-dehydro-beta-D-glucosyl-[(1-&gt;4)-beta-D-glucosyl]n-1 + [(1-&gt;4)-beta-D-glucosyl]m + acceptor + H2O.. Its function is as follows. Lytic polysaccharide monooxygenase (LPMO) that depolymerizes crystalline and amorphous polysaccharides via the oxidation of scissile alpha- or beta-(1-4)-glycosidic bonds, yielding C1 and C4 oxidation products. Catalysis by LPMOs requires the reduction of the active-site copper from Cu(II) to Cu(I) by a reducing agent and H(2)O(2) or O(2) as a cosubstrate. Shows activity on cellulosic substrates (Avicel, carboxymethylcellulose) and xylan. This Talaromyces verruculosus (Penicillium verruculosum) protein is AA9 family lytic polysaccharide monooxygenase A.